The following is a 235-amino-acid chain: MIYDTNLALQLRQGTTKAHSMAENVSFVKSFLGGVVDKQAYRQLIANFYFVYSAIEDEMKRHQESQIIKPIYFEELNRKSSLEEDLQFYYGLEWQDKIFPSPATKVYINRIHEISNTSPELLIAHCYTRYLGDLSGGQILKKITQSAMNLSGGEGTAFYEFKDIKDEKNFKQNYRLALDSIHLSDSAIKSIVSEANIAFKLNMKIFQELNSNFIKIIAIFLFNFIKRIKLPGFKS.

His-19 lines the heme b pocket.

It belongs to the heme oxygenase family.

It is found in the plastid. The protein localises to the chloroplast. The enzyme catalyses heme b + 3 reduced [NADPH--hemoprotein reductase] + 3 O2 = biliverdin IXalpha + CO + Fe(2+) + 3 oxidized [NADPH--hemoprotein reductase] + 3 H2O + H(+). Its function is as follows. Catalyzes the opening of the heme ring with the release of iron. Key enzyme in the synthesis of the chromophoric part of the photosynthetic antennae. The polypeptide is Heme oxygenase (pbsA) (Rhodella violacea (Red alga)).